The primary structure comprises 430 residues: ATP-dependent RNA helicase cgh-1 (430 aa).

Positions 43–71 match the Q motif motif; sequence VEFEDFCLGRDLLMGIFEKGWEKPSPIQE. The region spanning 74-244 is the Helicase ATP-binding domain; sequence IGVALTGQDI…QKHMHKPYEI (171 aa). 87-94 is an ATP binding site; it reads AKNGTGKT. The DEAD box motif lies at 192–195; the sequence is DEAD. The 161-residue stretch at 254 to 414 folds into the Helicase C-terminal domain; it reads GVTQYYAFVQ…PIPKTVDPKL (161 aa).

Belongs to the DEAD box helicase family. DDX6/DHH1 subfamily. As to quaternary structure, interacts with car-1 in a germline ribonucleoprotein complex. Interacts with ifet-1. Interacts with oma-1, which is a component of a ribonucleoprotein complex, in an RNA-dependent manner. As to expression, expression is restricted to two germline precursors Z2 and Z3 in L1 stage hermaphrodites, and is detectable specifically in the gonad at low levels into the L3 stage. Expression is significantly higher during the early L4 stage. In adults, expression remains gonad-specific and was not apparent in the somatically derived uterus. Expressed in germ granules (P granules); when associated with pgl-1.

It is found in the cytoplasm. It carries out the reaction ATP + H2O = ADP + phosphate + H(+). Probable RNA helicase required for oocyte and sperm function. Also required to prevent the physiological germline apoptosis mechanism killing essentially all developing oocytes. The sequence is that of ATP-dependent RNA helicase cgh-1 (cgh-1) from Caenorhabditis elegans.